A 90-amino-acid chain; its full sequence is Small ribosomal subunit protein bS16 (90 aa).

This sequence belongs to the bacterial ribosomal protein bS16 family.

In Lactobacillus helveticus (strain DPC 4571), this protein is Small ribosomal subunit protein bS16.